A 264-amino-acid polypeptide reads, in one-letter code: PDZ domain-containing protein 9 (264 aa).

Residues 22–109 (VHNLSKTQQT…GTVLQIKVYR (88 aa)) form the PDZ domain.

The sequence is that of PDZ domain-containing protein 9 (PDZD9) from Macaca fascicularis (Crab-eating macaque).